We begin with the raw amino-acid sequence, 299 residues long: Oxygen-dependent coproporphyrinogen-III oxidase (299 aa).

Position 92 (Ser-92) interacts with substrate. A divalent metal cation contacts are provided by His-96 and His-106. The Proton donor role is filled by His-106. 108–110 (NVR) provides a ligand contact to substrate. Residues His-145 and His-175 each contribute to the a divalent metal cation site. The interval 240–275 (YVEFNLVWDRGTLFGLQTGGRTESILMSMPPLVRWE) is important for dimerization. Residue 258 to 260 (GGR) coordinates substrate.

The protein belongs to the aerobic coproporphyrinogen-III oxidase family. As to quaternary structure, homodimer. It depends on a divalent metal cation as a cofactor.

It is found in the cytoplasm. The catalysed reaction is coproporphyrinogen III + O2 + 2 H(+) = protoporphyrinogen IX + 2 CO2 + 2 H2O. It participates in porphyrin-containing compound metabolism; protoporphyrin-IX biosynthesis; protoporphyrinogen-IX from coproporphyrinogen-III (O2 route): step 1/1. Involved in the heme biosynthesis. Catalyzes the aerobic oxidative decarboxylation of propionate groups of rings A and B of coproporphyrinogen-III to yield the vinyl groups in protoporphyrinogen-IX. This is Oxygen-dependent coproporphyrinogen-III oxidase from Salmonella dublin (strain CT_02021853).